We begin with the raw amino-acid sequence, 1297 residues long: Probable bifunctional E2/E3 enzyme R795 (1297 aa).

An RING-type; atypical zinc finger spans residues 74–128 (CAICRYQENEPCIEHKSSESNTKCPIAQSVSCSHSFHACCISRWLHTKKTCPLCN). Residues 678 to 750 (EPLQEFLCPI…RDWKENNTVI (73 aa)) enclose the U-box domain. Residues 899–1082 (EMTLEIHSSN…LDIMELETMI (184 aa)) form the VWFA domain. The UBC core domain occupies 1133–1279 (QKLIRVQREI…IIDYVNKFAL (147 aa)). Residue cysteine 1217 is the Glycyl thioester intermediate of the active site.

The protein in the C-terminal section; belongs to the ubiquitin-conjugating enzyme family.

The enzyme catalyses S-ubiquitinyl-[E2 ubiquitin-conjugating enzyme]-L-cysteine + [acceptor protein]-L-lysine = [E2 ubiquitin-conjugating enzyme]-L-cysteine + N(6)-ubiquitinyl-[acceptor protein]-L-lysine.. The catalysed reaction is S-ubiquitinyl-[E1 ubiquitin-activating enzyme]-L-cysteine + [E2 ubiquitin-conjugating enzyme]-L-cysteine = [E1 ubiquitin-activating enzyme]-L-cysteine + S-ubiquitinyl-[E2 ubiquitin-conjugating enzyme]-L-cysteine.. It functions in the pathway protein modification; protein ubiquitination. In terms of biological role, catalyzes the covalent attachment of ubiquitin to other proteins. Also acts as an E3 ubiquitin-protein ligase. In Acanthamoeba polyphaga (Amoeba), this protein is Probable bifunctional E2/E3 enzyme R795.